Reading from the N-terminus, the 204-residue chain is Factor arrest protein 3 (204 aa).

In terms of assembly, component of a complex at least composed of FAR3, FAR7, FAR8, FAR10, FAR11 and VPS64.

It localises to the endoplasmic reticulum. Participates in the control of the reentry into the cell cycle following pheromone treatment. The chain is Factor arrest protein 3 (FAR3) from Saccharomyces cerevisiae (strain ATCC 204508 / S288c) (Baker's yeast).